Reading from the N-terminus, the 437-residue chain is tRNA(Ile)-lysidine synthase (437 aa).

22–27 (SGGLDS) contributes to the ATP binding site.

It belongs to the tRNA(Ile)-lysidine synthase family.

The protein resides in the cytoplasm. The catalysed reaction is cytidine(34) in tRNA(Ile2) + L-lysine + ATP = lysidine(34) in tRNA(Ile2) + AMP + diphosphate + H(+). Its function is as follows. Ligates lysine onto the cytidine present at position 34 of the AUA codon-specific tRNA(Ile) that contains the anticodon CAU, in an ATP-dependent manner. Cytidine is converted to lysidine, thus changing the amino acid specificity of the tRNA from methionine to isoleucine. This chain is tRNA(Ile)-lysidine synthase, found in Xylella fastidiosa (strain 9a5c).